Reading from the N-terminus, the 218-residue chain is Pyridoxine/pyridoxamine 5'-phosphate oxidase (218 aa).

Substrate contacts are provided by residues 14–17 and Lys72; that span reads RREY. Residues 67 to 72, 82 to 83, Arg88, Lys89, and Gln111 each bind FMN; these read RIVLLK and YT. Residues Tyr129, Arg133, and Ser137 each contribute to the substrate site. Residues 146–147 and Trp191 contribute to the FMN site; that span reads QS. Residue 197-199 participates in substrate binding; sequence RLH. Arg201 serves as a coordination point for FMN.

The protein belongs to the pyridoxamine 5'-phosphate oxidase family. In terms of assembly, homodimer. Requires FMN as cofactor.

It catalyses the reaction pyridoxamine 5'-phosphate + O2 + H2O = pyridoxal 5'-phosphate + H2O2 + NH4(+). The enzyme catalyses pyridoxine 5'-phosphate + O2 = pyridoxal 5'-phosphate + H2O2. It functions in the pathway cofactor metabolism; pyridoxal 5'-phosphate salvage; pyridoxal 5'-phosphate from pyridoxamine 5'-phosphate: step 1/1. It participates in cofactor metabolism; pyridoxal 5'-phosphate salvage; pyridoxal 5'-phosphate from pyridoxine 5'-phosphate: step 1/1. In terms of biological role, catalyzes the oxidation of either pyridoxine 5'-phosphate (PNP) or pyridoxamine 5'-phosphate (PMP) into pyridoxal 5'-phosphate (PLP). The chain is Pyridoxine/pyridoxamine 5'-phosphate oxidase from Escherichia coli O139:H28 (strain E24377A / ETEC).